The chain runs to 144 residues: AP-4 complex subunit sigma-1 (144 aa).

The protein belongs to the adaptor complexes small subunit family. In terms of assembly, adaptor protein complex 4 (AP-4) is a heterotetramer composed of two large adaptins (epsilon-type subunit AP4E1 and beta-type subunit AP4B1), a medium adaptin (mu-type subunit AP4M1) and a small adaptin (sigma-type AP4S1). In terms of tissue distribution, widely expressed.

The protein localises to the golgi apparatus. The protein resides in the trans-Golgi network membrane. In terms of biological role, component of the adaptor protein complex 4 (AP-4). Adaptor protein complexes are vesicle coat components involved both in vesicle formation and cargo selection. They control the vesicular transport of proteins in different trafficking pathways. AP-4 forms a non clathrin-associated coat on vesicles departing the trans-Golgi network (TGN) and may be involved in the targeting of proteins from the trans-Golgi network (TGN) to the endosomal-lysosomal system. It is also involved in protein sorting to the basolateral membrane in epithelial cells and the proper asymmetric localization of somatodendritic proteins in neurons. AP-4 is involved in the recognition and binding of tyrosine-based sorting signals found in the cytoplasmic part of cargos, but may also recognize other types of sorting signal. This chain is AP-4 complex subunit sigma-1, found in Homo sapiens (Human).